A 300-amino-acid chain; its full sequence is Putative S-adenosyl-L-methionine-dependent methyltransferase Mkms_0379 (300 aa).

Residues Asp128 and 157–158 (DL) each bind S-adenosyl-L-methionine.

It belongs to the UPF0677 family.

In terms of biological role, exhibits S-adenosyl-L-methionine-dependent methyltransferase activity. The polypeptide is Putative S-adenosyl-L-methionine-dependent methyltransferase Mkms_0379 (Mycobacterium sp. (strain KMS)).